Consider the following 418-residue polypeptide: Light-independent protochlorophyllide reductase subunit N (418 aa).

Residues Cys-17, Cys-42, and Cys-103 each contribute to the [4Fe-4S] cluster site.

It belongs to the BchN/ChlN family. As to quaternary structure, protochlorophyllide reductase is composed of three subunits; ChlL, ChlN and ChlB. Forms a heterotetramer of two ChlB and two ChlN subunits. The cofactor is [4Fe-4S] cluster.

The catalysed reaction is chlorophyllide a + oxidized 2[4Fe-4S]-[ferredoxin] + 2 ADP + 2 phosphate = protochlorophyllide a + reduced 2[4Fe-4S]-[ferredoxin] + 2 ATP + 2 H2O. Its pathway is porphyrin-containing compound metabolism; chlorophyll biosynthesis (light-independent). In terms of biological role, component of the dark-operative protochlorophyllide reductase (DPOR) that uses Mg-ATP and reduced ferredoxin to reduce ring D of protochlorophyllide (Pchlide) to form chlorophyllide a (Chlide). This reaction is light-independent. The NB-protein (ChlN-ChlB) is the catalytic component of the complex. In Prochlorococcus marinus (strain MIT 9303), this protein is Light-independent protochlorophyllide reductase subunit N.